The sequence spans 155 residues: MSRRGTAEEKTAKSDPIYRNRLVNMLVNRILKHGKKSLAYQIIYRALKKIQQKTETNPLSVLRQAIRGVTPNIAVKARRVGGSTHQVPIEIGSTQGKALAIRWLLGASRKRPGRNMAFKLSSELVDAAKGGGDAIRKKEETHRMAEANRAFAHFR.

This sequence belongs to the universal ribosomal protein uS7 family. In terms of assembly, part of the 30S ribosomal subunit.

It is found in the plastid. The protein resides in the chloroplast. Functionally, one of the primary rRNA binding proteins, it binds directly to 16S rRNA where it nucleates assembly of the head domain of the 30S subunit. The sequence is that of Small ribosomal subunit protein uS7c (rps7) from Lilium superbum (Turk's cap lily).